The sequence spans 601 residues: Glutathione-regulated potassium-efflux system protein KefB (601 aa).

The next 13 membrane-spanning stretches (helical) occupy residues 4–24, 29–49, 55–75, 87–107, 111–131, 152–172, 177–197, 207–227, 230–250, 262–282, 284–304, 324–344, and 356–376; these read ADLL…VPLA, IGAV…GLGF, EILH…GLEL, IFGV…GLLM, FLWQ…TAMA, VLLF…LLAG, HFDW…LIGG, FIAA…LVLS, LFMD…GVLL, AIDP…GMSL, LGVL…LVVI, MQFA…FSTA, and ALLL…MKGI. Residues 400–519 enclose the RCK N-terminal domain; sequence KPQVIVVGFG…AGVTQFSRET (120 aa).

Belongs to the monovalent cation:proton antiporter 2 (CPA2) transporter (TC 2.A.37) family. KefB subfamily. Interacts with the regulatory subunit KefG.

The protein resides in the cell inner membrane. Functionally, pore-forming subunit of a potassium efflux system that confers protection against electrophiles. Catalyzes K(+)/H(+) antiport. The chain is Glutathione-regulated potassium-efflux system protein KefB from Salmonella enteritidis PT4 (strain P125109).